The chain runs to 49 residues: Large ribosomal subunit protein bL33C (49 aa).

Belongs to the bacterial ribosomal protein bL33 family.

The protein is Large ribosomal subunit protein bL33C of Lactococcus lactis subsp. cremoris (strain MG1363).